Consider the following 444-residue polypeptide: 23S rRNA (uracil(1939)-C(5))-methyltransferase RlmD (444 aa).

The 60-residue stretch at 5 to 64 (KPKLNLTSQTARIVNLSHDGRGIARVNGKATFIQGALPGEVVEFQYTRIKKDFDEGKLLS) folds into the TRAM domain. [4Fe-4S] cluster is bound by residues Cys-77, Cys-83, Cys-86, and Cys-166. S-adenosyl-L-methionine is bound by residues Gln-276, Phe-305, Asn-310, Glu-326, Asn-353, and Asp-374. Catalysis depends on Cys-400, which acts as the Nucleophile.

Belongs to the class I-like SAM-binding methyltransferase superfamily. RNA M5U methyltransferase family. RlmD subfamily.

The catalysed reaction is uridine(1939) in 23S rRNA + S-adenosyl-L-methionine = 5-methyluridine(1939) in 23S rRNA + S-adenosyl-L-homocysteine + H(+). Catalyzes the formation of 5-methyl-uridine at position 1939 (m5U1939) in 23S rRNA. The protein is 23S rRNA (uracil(1939)-C(5))-methyltransferase RlmD of Legionella pneumophila (strain Corby).